The sequence spans 261 residues: Triosephosphate isomerase (261 aa).

Substrate is bound at residue N10–K12. The Electrophile role is filled by H100. Catalysis depends on E172, which acts as the Proton acceptor. Residues G178, S218, and G239 to G240 contribute to the substrate site.

Belongs to the triosephosphate isomerase family. As to quaternary structure, homodimer.

It is found in the cytoplasm. The catalysed reaction is D-glyceraldehyde 3-phosphate = dihydroxyacetone phosphate. Its pathway is carbohydrate biosynthesis; gluconeogenesis. The protein operates within carbohydrate degradation; glycolysis; D-glyceraldehyde 3-phosphate from glycerone phosphate: step 1/1. Involved in the gluconeogenesis. Catalyzes stereospecifically the conversion of dihydroxyacetone phosphate (DHAP) to D-glyceraldehyde-3-phosphate (G3P). This is Triosephosphate isomerase from Mycolicibacterium vanbaalenii (strain DSM 7251 / JCM 13017 / BCRC 16820 / KCTC 9966 / NRRL B-24157 / PYR-1) (Mycobacterium vanbaalenii).